Reading from the N-terminus, the 282-residue chain is Acetylglutamate kinase (282 aa).

Residues 62-63, arginine 84, and asparagine 178 contribute to the substrate site; that span reads GG.

This sequence belongs to the acetylglutamate kinase family. ArgB subfamily.

It is found in the cytoplasm. It catalyses the reaction N-acetyl-L-glutamate + ATP = N-acetyl-L-glutamyl 5-phosphate + ADP. It participates in amino-acid biosynthesis; L-arginine biosynthesis; N(2)-acetyl-L-ornithine from L-glutamate: step 2/4. In terms of biological role, catalyzes the ATP-dependent phosphorylation of N-acetyl-L-glutamate. The sequence is that of Acetylglutamate kinase from Thermotoga neapolitana (strain ATCC 49049 / DSM 4359 / NBRC 107923 / NS-E).